The primary structure comprises 282 residues: 4-hydroxy-3-methylbut-2-enyl diphosphate reductase (282 aa).

Residue cysteine 12 participates in [4Fe-4S] cluster binding. Positions 40 and 72 each coordinate (2E)-4-hydroxy-3-methylbut-2-enyl diphosphate. Residues histidine 40 and histidine 72 each coordinate dimethylallyl diphosphate. Residues histidine 40 and histidine 72 each coordinate isopentenyl diphosphate. Cysteine 94 serves as a coordination point for [4Fe-4S] cluster. Histidine 122 contributes to the (2E)-4-hydroxy-3-methylbut-2-enyl diphosphate binding site. Histidine 122 lines the dimethylallyl diphosphate pocket. Histidine 122 provides a ligand contact to isopentenyl diphosphate. Glutamate 124 serves as the catalytic Proton donor. (2E)-4-hydroxy-3-methylbut-2-enyl diphosphate is bound at residue threonine 160. Position 188 (cysteine 188) interacts with [4Fe-4S] cluster. Serine 216, asparagine 218, and serine 260 together coordinate (2E)-4-hydroxy-3-methylbut-2-enyl diphosphate. The dimethylallyl diphosphate site is built by serine 216, asparagine 218, and serine 260. The isopentenyl diphosphate site is built by serine 216, asparagine 218, and serine 260.

The protein belongs to the IspH family. It depends on [4Fe-4S] cluster as a cofactor.

It carries out the reaction isopentenyl diphosphate + 2 oxidized [2Fe-2S]-[ferredoxin] + H2O = (2E)-4-hydroxy-3-methylbut-2-enyl diphosphate + 2 reduced [2Fe-2S]-[ferredoxin] + 2 H(+). The catalysed reaction is dimethylallyl diphosphate + 2 oxidized [2Fe-2S]-[ferredoxin] + H2O = (2E)-4-hydroxy-3-methylbut-2-enyl diphosphate + 2 reduced [2Fe-2S]-[ferredoxin] + 2 H(+). Its pathway is isoprenoid biosynthesis; dimethylallyl diphosphate biosynthesis; dimethylallyl diphosphate from (2E)-4-hydroxy-3-methylbutenyl diphosphate: step 1/1. The protein operates within isoprenoid biosynthesis; isopentenyl diphosphate biosynthesis via DXP pathway; isopentenyl diphosphate from 1-deoxy-D-xylulose 5-phosphate: step 6/6. Catalyzes the conversion of 1-hydroxy-2-methyl-2-(E)-butenyl 4-diphosphate (HMBPP) into a mixture of isopentenyl diphosphate (IPP) and dimethylallyl diphosphate (DMAPP). Acts in the terminal step of the DOXP/MEP pathway for isoprenoid precursor biosynthesis. The polypeptide is 4-hydroxy-3-methylbut-2-enyl diphosphate reductase (Geobacter sulfurreducens (strain ATCC 51573 / DSM 12127 / PCA)).